We begin with the raw amino-acid sequence, 451 residues long: MSRIERIFAREILDSRGTPTVEVEVWTEFGGYGCAKAPSGASTGVNEALELRDGDKARYNGKGVLKAVKNVNEIIAPKLIGVDALDQLTVDRIMLDLDGTEFKTKLGANGILAVSLAVAKSAASELDIPLYKYLGGVQAKKLPVPMLNVINGGEHADSAIDFQEFMIMPVGAKSFSEALRWSSETFQALKSLLKSKKDITAVGDEGGFAPNFEWAYEKHDLKSFKAKTPAEIALDLLVEAIKKAGYKPGKDGIMIAMDCASSELYLEDKKYHFKKIEKVTNQEWSLTTDEMISYLEKLVDNYPIISIEDGLAETDWEGFTKLTQKIGDKVQIVGDDLFTTNPKFIKQGINKKAANSTLIKLNQIGTLSETVEAITMTQKAGWTAVVSHRSGETEDTTIADLAVAFNTGQIKTGSMSRSDRIAKYNRLLQIESELDKNAVYDGLEAFYNLKK.

Residue glutamine 163 coordinates (2R)-2-phosphoglycerate. Residue glutamate 205 is the Proton donor of the active site. Mg(2+) contacts are provided by aspartate 258, glutamate 308, and aspartate 335. Lysine 360, arginine 389, serine 390, and lysine 411 together coordinate (2R)-2-phosphoglycerate. The active-site Proton acceptor is lysine 360.

This sequence belongs to the enolase family. Mg(2+) is required as a cofactor.

The protein resides in the cytoplasm. It localises to the secreted. Its subcellular location is the cell surface. It catalyses the reaction (2R)-2-phosphoglycerate = phosphoenolpyruvate + H2O. It participates in carbohydrate degradation; glycolysis; pyruvate from D-glyceraldehyde 3-phosphate: step 4/5. In terms of biological role, catalyzes the reversible conversion of 2-phosphoglycerate (2-PG) into phosphoenolpyruvate (PEP). It is essential for the degradation of carbohydrates via glycolysis. The sequence is that of Enolase from Mycoplasma mycoides subsp. mycoides SC (strain CCUG 32753 / NCTC 10114 / PG1).